The primary structure comprises 1013 residues: Trehalose monomycolate exporter MmpL3 (1013 aa).

Topologically, residues 1–14 are cytoplasmic; the sequence is MFAWWGRTVYQFRY. Residues 15–35 form a helical membrane-spanning segment; the sequence is IVIGVMVALCLGGGVYGISLG. Topologically, residues 36 to 196 are periplasmic; that stretch reads NHVTQSGFYD…KRAEVAAIPL (161 aa). 40 to 44 provides a ligand contact to a 1,2-diacylglycero-3-phosphoethanolamine; the sequence is QSGFY. 2 helical membrane-spanning segments follow: residues 197–217 and 218–238; these read VAVV…PAII and GGLA…FTPV. Topologically, residues 239–240 are periplasmic; it reads HF. A helical membrane pass occupies residues 241-261; that stretch reads FAQPVVTLIGLGIAIDYGLFI. Residues 262-290 lie on the Cytoplasmic side of the membrane; that stretch reads VSRFREEIAEGYDTEAAVRRTVMTSGRTV. The helical transmembrane segment at 291–311 threads the bilayer; the sequence is VFSAVIIVASSVPLLLFPQGF. Over 312 to 317 the chain is Periplasmic; the sequence is LKSITY. A helical transmembrane segment spans residues 318-338; it reads AIIASVMLAAILSITVLAAAL. Residues 339–401 lie on the Cytoplasmic side of the membrane; sequence AILGPRVDAL…RLVNVVMKRP (63 aa). A helical transmembrane segment spans residues 402–422; it reads IAFAAPILVVMVLLIIPLGQL. Over 423–567 the chain is Periplasmic; sequence SLGGISEKYL…HSLFDKLPLM (145 aa). The disordered stretch occupies residues 485-513; sequence SGFTDPDNDPEKMWKERPANDSGSKDPSV. The segment covering 493 to 512 has biased composition (basic and acidic residues); it reads DPEKMWKERPANDSGSKDPS. A helical membrane pass occupies residues 568–588; the sequence is ALILIVTTTVLMFLAFGSVVL. Over 589–591 the chain is Cytoplasmic; that stretch reads PIK. Residues 592–612 traverse the membrane as a helical segment; sequence AALMSALTLGSTMGILTWMFV. Residues 613 to 630 are Periplasmic-facing; sequence DGHGSGLMNYTPQPLMAP. A helical transmembrane segment spans residues 631–651; the sequence is MIGLIIAVIWGLSTDYEVFLV. Aspartate 645 lines the SQ109 pocket. Residues 652–678 lie on the Cytoplasmic side of the membrane; it reads SRMVEARERGMSTAEAIRIGTATTGRL. Residues 679 to 699 traverse the membrane as a helical segment; sequence ITGAALILAVVAGAFVFSDLV. At 700–703 the chain is on the periplasmic side; that stretch reads MMKY. The chain crosses the membrane as a helical span at residues 704–724; that stretch reads LAFGLLIALLLDATIIRMFLV. Topologically, residues 725–1013 are cytoplasmic; sequence PAVMKLLGDD…QDLLRREGRL (289 aa). The segment at 754 to 1013 is disordered; that stretch reads TELPDERKRP…QDLLRREGRL (260 aa). A compositionally biased stretch (basic and acidic residues) spans 757–772; sequence PDERKRPTVRESETDQ. Pro residues-rich tracts occupy residues 792-803 and 820-829; these read HPAPEPVRPMPP and PPQPPQPPQA. Residues 842–867 show a composition bias toward low complexity; that stretch reads RFAMARNAVRNAVNSAVHGGAGSAAA. The span at 875–885 shows a compositional bias: pro residues; the sequence is PGGPAQPPAPP. The span at 973–996 shows a compositional bias: basic and acidic residues; that stretch reads REQEPSTEKLNTREDAPEDPETKR.

It belongs to the resistance-nodulation-cell division (RND) (TC 2.A.6) family. MmpL subfamily. In terms of assembly, monomer. Interacts with TtfA (via N-terminus); active trehalose monomycolate (TMM) biosynthesis is not required for the complex formation. Interacts with MSMEG_5308.

Its subcellular location is the cell inner membrane. It is found in the cell septum. It localises to the cell tip. Its activity is regulated as follows. Inhibited by the antimycobacterial compound BM212, a pyrrole derivative. Inhibited by the antitubercular drug SQ109. Inhibited by the adamantyl urea derivative AU1235, the indole carboxamide ICA38 and rimonabant, the antagonist for the cannabinoid receptor CB1. The dissociation constant (Kd) values for SQ109, AU1235, ICA38 and rimonabant are 1.65 uM, 0.29, 0.16 and 29.5, respectively. Inhibitory effects are due to binding of the inhibitors at the proton-transportation channel most likely dissipating the transmembrane electrochemical proton gradient needed for substrate translocation. In terms of biological role, transports trehalose monomycolate (TMM) to the cell wall. Flips TMM across the inner membrane. Membrane potential is not required for this function. Transports probably phosphatidylethanolamine (PE) as well. Binds specifically both TMM and PE, but not trehalose dimycolate (TDM). Also binds diacylglycerol (DAG) and other phospholipids, including phosphatidylglycerol (PG), phosphatidylinositol (PI), and cardiolipin (CDL). Contributes to membrane potential, cell wall composition, antibiotic susceptibility and fitness. The sequence is that of Trehalose monomycolate exporter MmpL3 from Mycolicibacterium smegmatis (strain ATCC 700084 / mc(2)155) (Mycobacterium smegmatis).